We begin with the raw amino-acid sequence, 216 residues long: Large ribosomal subunit protein uL24m (216 aa).

The N-terminal 9 residues, Met1–Met9, are a transit peptide targeting the mitochondrion. The region spanning Tyr56–Asp89 is the KOW domain.

Belongs to the universal ribosomal protein uL24 family. Component of the mitochondrial ribosome large subunit (39S) which comprises a 16S rRNA and about 50 distinct proteins. As to expression, ubiquitous. Expressed at greater levels in the kidney, adipose tissue, muscle and liver than the brain, heart, ovary and lung.

It is found in the mitochondrion. The chain is Large ribosomal subunit protein uL24m (mrpl24) from Xenopus laevis (African clawed frog).